The sequence spans 217 residues: E3 ubiquitin-protein ligase znrf2 (217 aa).

2 disordered regions span residues 1–27 (MGAKQSSPAANGRTRAYSGSDLPSATA) and 63–111 (QFIS…ERST). Glycine 2 carries the N-myristoyl glycine lipid modification. A compositionally biased stretch (polar residues) spans 68–100 (RTRSVGPSARPQSGINIPNSGAYSSADSGNSTP). The segment at 174–215 (CAICLEELLQGDTIARLPCLCIYHKGCIDEWFEVNRSCPEHP) adopts an RING-type; atypical zinc-finger fold.

Its subcellular location is the endosome membrane. It is found in the lysosome membrane. The protein localises to the presynaptic cell membrane. It catalyses the reaction S-ubiquitinyl-[E2 ubiquitin-conjugating enzyme]-L-cysteine + [acceptor protein]-L-lysine = [E2 ubiquitin-conjugating enzyme]-L-cysteine + N(6)-ubiquitinyl-[acceptor protein]-L-lysine.. The protein operates within protein modification; protein ubiquitination. Functionally, may play a role in the establishment and maintenance of neuronal transmission and plasticity via its ubiquitin ligase activity. E3 ubiquitin ligases accept ubiquitin from an E2 ubiquitin-conjugating enzyme in the form of a thioester and then directly transfer the ubiquitin to targeted substrates. This is E3 ubiquitin-protein ligase znrf2 (znrf2) from Danio rerio (Zebrafish).